The following is a 270-amino-acid chain: Centriole, cilia and spindle-associated protein (270 aa).

Met1 is modified (N-acetylmethionine). Positions 9-15 (SEYMKRY) match the ST]-E-Y-X(3)-Y motif 1; required for efficient microtubule binding and stabilization motif. Disordered stretches follow at residues 50 to 201 (DDWG…SQKT) and 231 to 255 (LVAQ…SSSE). A compositionally biased stretch (low complexity) spans 53-67 (GPAGSSEDSASSESS). The segment covering 75 to 86 (RCAPPSPPPPVE) has biased composition (pro residues). Over residues 92 to 101 (EAERRARGAP) the composition is skewed to basic and acidic residues. A compositionally biased stretch (acidic residues) spans 102 to 118 (EEQDAEAGDAEAEDAED). Basic and acidic residues predominate over residues 127 to 144 (KDVEDKPEQQTRTRETDK). Positions 145-156 (SPTSTEPRQQPS) are enriched in polar residues. The ST]-E-Y-X(3)-Y motif 2; required for efficient microtubule binding and stabilization motif lies at 260 to 266 (TEYMRCY).

The protein belongs to the CCSAP family. As to quaternary structure, associates with microtubules; the association occurs on polyglutamylated tubulin.

It is found in the cytoplasm. The protein localises to the cytoskeleton. Its subcellular location is the microtubule organizing center. It localises to the centrosome. The protein resides in the centriole. It is found in the spindle. The protein localises to the cilium basal body. Its subcellular location is the cilium axoneme. It localises to the cell projection. The protein resides in the axon. It is found in the cilium. Plays a role in microtubule (MT) stabilization and this stabilization involves the maintenance of NUMA1 at the spindle poles. Colocalizes with polyglutamylated MTs to promote MT stabilization and regulate bipolar spindle formation in mitosis. Binding of CCSAP to centrosomes and the spindle around centrosomes during mitosis inhibits MT depolymerization, thereby stabilizing the mitotic spindle. May play a role in embryonic development. May be required for proper cilia beating. The sequence is that of Centriole, cilia and spindle-associated protein (CCSAP) from Homo sapiens (Human).